The following is a 542-amino-acid chain: Chaperonin GroEL (542 aa).

ATP contacts are provided by residues 29–32, 86–90, G413, 476–478, and D492; these read TLGP, DGTTT, and NAA. The disordered stretch occupies residues 522–542; that stretch reads PDENGPAAVPDMGMGGMGGMM.

This sequence belongs to the chaperonin (HSP60) family. In terms of assembly, forms a cylinder of 14 subunits composed of two heptameric rings stacked back-to-back. Interacts with the co-chaperonin GroES.

It localises to the cytoplasm. The catalysed reaction is ATP + H2O + a folded polypeptide = ADP + phosphate + an unfolded polypeptide.. Together with its co-chaperonin GroES, plays an essential role in assisting protein folding. The GroEL-GroES system forms a nano-cage that allows encapsulation of the non-native substrate proteins and provides a physical environment optimized to promote and accelerate protein folding. This is Chaperonin GroEL from Listeria monocytogenes serotype 4b (strain CLIP80459).